Reading from the N-terminus, the 382-residue chain is Protein RecA (382 aa).

The interval 1-20 (MPADVKAAQSSAGDSRPGER) is disordered. ATP is bound at residue 79–86 (GPESSGKT). Over residues 360 to 369 (SAAAKPSAKT) the composition is skewed to low complexity. A disordered region spans residues 360 to 382 (SAAAKPSAKTADTDKKLVADGAA). Residues 370–382 (ADTDKKLVADGAA) are compositionally biased toward basic and acidic residues.

This sequence belongs to the RecA family.

The protein resides in the cytoplasm. Functionally, can catalyze the hydrolysis of ATP in the presence of single-stranded DNA, the ATP-dependent uptake of single-stranded DNA by duplex DNA, and the ATP-dependent hybridization of homologous single-stranded DNAs. It interacts with LexA causing its activation and leading to its autocatalytic cleavage. In Synechococcus sp. (strain CC9311), this protein is Protein RecA.